A 534-amino-acid polypeptide reads, in one-letter code: Glucomannan 4-beta-mannosyltransferase 2 (534 aa).

Residues 36–56 traverse the membrane as a helical segment; the sequence is VIVPLLQLAVYICLLMSVMLL. The active site involves Asp-136. Positions 195 and 197 each coordinate substrate. Residue Asp-289 is part of the active site. A run of 4 helical transmembrane segments spans residues 368–388, 404–426, 483–503, and 509–529; these read IIAH…TILV, IITI…WILF, LNTL…YDFV, and YFIY…GWIG.

Belongs to the glycosyltransferase 2 family. Plant cellulose synthase-like A subfamily.

Its subcellular location is the golgi apparatus membrane. The catalysed reaction is GDP-mannose + (glucomannan)n = GDP + (glucomannan)n+1.. Functionally, possesses glucomannan synthase and mannan synthase activities in vitro. Mannan synthase consists of a 4-beta-mannosyltransferase activity on mannan using GDP-mannose. The beta-1,4-mannan product is the backbone for galactomannan synthesis by galactomannan galactosyltransferase. Galactomannan is a noncellulosic polysaccharides of plant cell wall. This is Glucomannan 4-beta-mannosyltransferase 2 from Arabidopsis thaliana (Mouse-ear cress).